Here is a 319-residue protein sequence, read N- to C-terminus: uncharacterized protein (319 aa).

The chain crosses the membrane as a helical span at residues 270 to 290 (AAALWWIPAWLAMIVEVAVLG).

Its subcellular location is the membrane. This is an uncharacterized protein from Mycobacterium tuberculosis (strain CDC 1551 / Oshkosh).